The sequence spans 249 residues: ATP synthase subunit a, chloroplastic (249 aa).

The next 5 membrane-spanning stretches (helical) occupy residues 40 to 60 (QVLITSWVVIAILLGSAVLAV), 97 to 117 (VPFIGTLFLFIFVSNWSGALL), 136 to 156 (INTTVALALLTSVAYFYAGLS), 201 to 221 (LVVVVLVSLVPLVVPIPVMFL), and 222 to 242 (GLFTSGIQALIFATLAAAYIG).

Belongs to the ATPase A chain family. As to quaternary structure, F-type ATPases have 2 components, CF(1) - the catalytic core - and CF(0) - the membrane proton channel. CF(1) has five subunits: alpha(3), beta(3), gamma(1), delta(1), epsilon(1). CF(0) has four main subunits: a, b, b' and c.

Its subcellular location is the plastid. The protein localises to the chloroplast thylakoid membrane. In terms of biological role, key component of the proton channel; it plays a direct role in the translocation of protons across the membrane. This is ATP synthase subunit a, chloroplastic from Draba nemorosa (Woodland whitlowgrass).